The chain runs to 269 residues: Formamidopyrimidine-DNA glycosylase (269 aa).

P2 acts as the Schiff-base intermediate with DNA in catalysis. E3 serves as the catalytic Proton donor. Residue K57 is the Proton donor; for beta-elimination activity of the active site. DNA contacts are provided by H90, R109, and R150. The FPG-type zinc-finger motif lies at 235–269; sequence QVYGRAGEACLTCGTTIKRSKHGQRTTFYCPHCQR. The active-site Proton donor; for delta-elimination activity is the R259.

The protein belongs to the FPG family. In terms of assembly, monomer. Zn(2+) is required as a cofactor.

The enzyme catalyses Hydrolysis of DNA containing ring-opened 7-methylguanine residues, releasing 2,6-diamino-4-hydroxy-5-(N-methyl)formamidopyrimidine.. The catalysed reaction is 2'-deoxyribonucleotide-(2'-deoxyribose 5'-phosphate)-2'-deoxyribonucleotide-DNA = a 3'-end 2'-deoxyribonucleotide-(2,3-dehydro-2,3-deoxyribose 5'-phosphate)-DNA + a 5'-end 5'-phospho-2'-deoxyribonucleoside-DNA + H(+). Involved in base excision repair of DNA damaged by oxidation or by mutagenic agents. Acts as a DNA glycosylase that recognizes and removes damaged bases. Has a preference for oxidized purines, such as 7,8-dihydro-8-oxoguanine (8-oxoG). Has AP (apurinic/apyrimidinic) lyase activity and introduces nicks in the DNA strand. Cleaves the DNA backbone by beta-delta elimination to generate a single-strand break at the site of the removed base with both 3'- and 5'-phosphates. The polypeptide is Formamidopyrimidine-DNA glycosylase (Edwardsiella ictaluri (strain 93-146)).